A 457-amino-acid chain; its full sequence is Phosphatidate cytidylyltransferase (457 aa).

A run of 6 helical transmembrane segments spans residues 71 to 91, 154 to 174, 188 to 208, 214 to 234, 255 to 275, and 330 to 350; these read VMIS…IVLI, FIVT…FVLF, GSLC…HLII, GLFW…FAYL, GFLG…RILS, and FHAL…GFFA.

Belongs to the CDS family. In terms of assembly, homodimer. The cofactor is Mg(2+).

The protein localises to the endoplasmic reticulum membrane. Its subcellular location is the cytoplasmic vesicle. It localises to the secretory vesicle. It carries out the reaction a 1,2-diacyl-sn-glycero-3-phosphate + CTP + H(+) = a CDP-1,2-diacyl-sn-glycerol + diphosphate. Its pathway is phospholipid metabolism; CDP-diacylglycerol biosynthesis; CDP-diacylglycerol from sn-glycerol 3-phosphate: step 3/3. Supplies CDP-diacylglycerol, which may play an important role as both a precursor to phosphoinositide biosynthesis in the plasma membrane and as a negative effector of phosphatidylinositol 4-kinase activity, thereby exerting an effect on cell proliferation via a lipid-dependent signal transduction cascade. The protein is Phosphatidate cytidylyltransferase (CDS1) of Saccharomyces cerevisiae (strain ATCC 204508 / S288c) (Baker's yeast).